The following is a 1084-amino-acid chain: TNF receptor-associated factor family protein DDB_G0272098 (1084 aa).

The LIM zinc-binding domain maps to 19–103 (YYCPDCGELL…KNRYYETKNF (85 aa)). 2 consecutive TRAF-type zinc fingers follow at residues 122–190 (KHIK…IDHE) and 191–248 (IHLS…YNMS). A coiled-coil region spans residues 265–321 (IEEQNQDIKELHNFIENHLSKKFIDLDTIVNIQKYLIKNKNQKISQLTEIIKRVDNS). 4 disordered regions span residues 348–392 (YKNS…NINE), 490–523 (IRQQ…NTTI), 537–656 (NNNI…KDGL), and 709–897 (SIVE…NDDD). Low complexity-rich tracts occupy residues 349–375 (KNSN…TNEN), 492–509 (QQQQ…QQQQ), 537–549 (NNNI…NNNK), and 556–570 (ITAA…TTST). A coiled-coil region spans residues 489–553 (LIRQQQQQQQ…NNNNNKNNDD (65 aa)). Positions 571–586 (HTILNGTNNEASMTDI) are enriched in polar residues. A compositionally biased stretch (low complexity) spans 587–637 (NETTSTTTTAETTEATASESTEESNNTAETTTTTTTTTTTITTAAETVNST). Positions 644-656 (TSEKVEEKGKDGL) are enriched in basic and acidic residues. Residues 735-852 (NGNENENENE…NNNNNNNENV (118 aa)) adopt a coiled-coil conformation. Residues 739–757 (NENENENENENENENENEN) show a composition bias toward acidic residues. The span at 774-785 (SNINTSNDTEPT) shows a compositional bias: polar residues. The segment covering 790–799 (EDIKKNKENE) has biased composition (basic and acidic residues). Over residues 809 to 849 (NNNIKSVEDTNNNNNNNNNNNNNNNNNNNNNNNNNNNNNNN) the composition is skewed to low complexity. Basic and acidic residues-rich tracts occupy residues 853 to 864 (YDIKKDRNRENV) and 875 to 892 (ENGK…SEDK). The MATH domain occupies 909-1042 (IFRNQILFKD…DNCFIVNLEV (134 aa)). The tract at residues 1056–1084 (LLQKSSPPAATTTTTTSSSSSKTTPKTKR) is disordered. A compositionally biased stretch (low complexity) spans 1059–1084 (KSSPPAATTTTTTSSSSSKTTPKTKR).

It belongs to the TNF receptor-associated factor family.

The protein localises to the cytoplasm. Probable adapter protein and signal transducer that links members of the tumor necrosis factor receptor family to different signaling pathways by association with the receptor cytoplasmic domain and kinases. The sequence is that of TNF receptor-associated factor family protein DDB_G0272098 from Dictyostelium discoideum (Social amoeba).